The sequence spans 756 residues: MINNHTLGFPRIGLFRELKVAQEKYWSRKISKEELFSVGKTLRVRHWQQQKELGINYIPVGDFSWYDHVLGTSMLLGNIPKRHKNGNDLVTLDTLFRVARGVAPTGASVSASEMTKWFNTNYHYIVPEFSIKSEFCFSWRQILDEIDEALLLGHQVKPVILGPLTYLWLGKVKGKKFDRLNLLKEILPVYKYLLSEINDRNISWVQIDEPILTLELPEKWKNAFRFAYQSLYGYNSLLLTTYFGSVQHNFSLICELPIQGVHLDLVHGKYDLVFLNSFIPEKWLISLGIINGKNIWKADLVMWFKRLQLFSKLRHSLWIGTSCSLLHVPIDLKLENKISSEVRSWFSFALQKCQELTLLRDALNNSNTVTEDIRVWSQPIHSRKKSAIVHNVDVKERLKSITSNDFKRNNVFSVRKQKQHKNLKLPILPTTTIGSFPQTADIRKARFDFKKGNINHDQYNTFISKHIQNAILKQEKLGIDVLVHGEFERNDMVEYFGEHLNGFVFTEFGWVQSYGSRCVKPPIIIGDVSRSKPISLDWIKYAQTLTSKPVKGMLTGPVTILLWSFVREDLSKKIISRQIALALRDEVLDLEQSGVKIIQIDEPALREGLPLRLSLRNEYLSWAVDSFKLSSSGVCDETQIHTHMCYCEFNDIMNAIVLLDADVITIETSRSDMELLEFFKEFKYPNDIGPGVYDIHSPNIPSIEWIMTLLRQAMHYIPVKRLWVNPDCGLKTRTWDETYYSLENMVRAAKILRKKL.

5-methyltetrahydropteroyltri-L-glutamate is bound by residues 16 to 19 (RELK) and lysine 116. L-homocysteine-binding positions include 433 to 435 (IGS) and glutamate 486. Residues 433–435 (IGS) and glutamate 486 contribute to the L-methionine site. 5-methyltetrahydropteroyltri-L-glutamate is bound by residues 517–518 (RC) and tryptophan 563. Aspartate 601 is a binding site for L-homocysteine. Residue aspartate 601 participates in L-methionine binding. Residue glutamate 607 coordinates 5-methyltetrahydropteroyltri-L-glutamate. Positions 643, 645, and 667 each coordinate Zn(2+). Residue histidine 696 is the Proton donor of the active site. Cysteine 728 provides a ligand contact to Zn(2+).

It belongs to the vitamin-B12 independent methionine synthase family. It depends on Zn(2+) as a cofactor.

The enzyme catalyses 5-methyltetrahydropteroyltri-L-glutamate + L-homocysteine = tetrahydropteroyltri-L-glutamate + L-methionine. Its pathway is amino-acid biosynthesis; L-methionine biosynthesis via de novo pathway; L-methionine from L-homocysteine (MetE route): step 1/1. Its function is as follows. Catalyzes the transfer of a methyl group from 5-methyltetrahydrofolate to homocysteine resulting in methionine formation. The chain is 5-methyltetrahydropteroyltriglutamate--homocysteine methyltransferase from Buchnera aphidicola subsp. Baizongia pistaciae (strain Bp).